The following is a 385-amino-acid chain: MNIHEYQGKEVLRKYGVSVPEGKVAFTAEEAVEKAESLSSSVYVVKAQIHAGGRGKAGGVKIAKTKDEVKEYAEELLGKTLVTHQTGPDGQVIKRLLIEEGCDIKKEYYVGLVLDRATSRIVLMASEEGGTEIEEVAEKTPEKIKKAVIDPAVGLQGYQAREIAFAINIPKELVGKAAKFMLGLYKAFVEKDCSIAEINPLVVTGDGNVMALDAKLNFDSNALYRQKDIMEYRDLDEEDPKEIEASKYDLSYISLDGNIGCMVNGAGLAMSTMDIIKHYGGEPANFLDVGGGATAEKVTEAFKIILSDQNVKGIFVNIFGGIMKCDVIAEGVVEATRQVGLTLPLVVRLEGTNVDLGKKILNESGLNITSAESMADGAQKIVSLV.

Positions 9–244 (KEVLRKYGVS…LDEEDPKEIE (236 aa)) constitute an ATP-grasp domain. Residues K46, 53–55 (GRG), E99, C102, and E107 contribute to the ATP site. Positions 199 and 213 each coordinate Mg(2+). Substrate-binding positions include N264 and 321-323 (GIM).

Belongs to the succinate/malate CoA ligase beta subunit family. In terms of assembly, heterotetramer of two alpha and two beta subunits. Mg(2+) is required as a cofactor.

The enzyme catalyses succinate + ATP + CoA = succinyl-CoA + ADP + phosphate. The catalysed reaction is GTP + succinate + CoA = succinyl-CoA + GDP + phosphate. It functions in the pathway carbohydrate metabolism; tricarboxylic acid cycle; succinate from succinyl-CoA (ligase route): step 1/1. Its function is as follows. Succinyl-CoA synthetase functions in the citric acid cycle (TCA), coupling the hydrolysis of succinyl-CoA to the synthesis of either ATP or GTP and thus represents the only step of substrate-level phosphorylation in the TCA. The beta subunit provides nucleotide specificity of the enzyme and binds the substrate succinate, while the binding sites for coenzyme A and phosphate are found in the alpha subunit. The protein is Succinate--CoA ligase [ADP-forming] subunit beta of Bacillus velezensis (strain DSM 23117 / BGSC 10A6 / LMG 26770 / FZB42) (Bacillus amyloliquefaciens subsp. plantarum).